We begin with the raw amino-acid sequence, 750 residues long: Photosystem I P700 chlorophyll a apoprotein A1 (750 aa).

8 consecutive transmembrane segments (helical) span residues 70-93 (VFSA…FHGA), 156-179 (LYCT…FHYH), 195-219 (LNHH…HVSL), 291-309 (IAHH…GHMY), 346-369 (WHAQ…HHMY), 385-411 (LSLF…IFMV), 433-455 (AIIS…LYIH), and 531-549 (FLVH…LILL). Residues Cys573 and Cys582 each contribute to the [4Fe-4S] cluster site. 2 helical membrane passes run 589-610 (HVFL…HFSW) and 664-686 (LSAY…MFLF). His675 provides a ligand contact to chlorophyll a'. Met683 and Tyr691 together coordinate chlorophyll a. Trp692 is a binding site for phylloquinone. The helical transmembrane segment at 724 to 744 (TVGVTHYLLGGIATTWAFFLA) threads the bilayer.

The protein belongs to the PsaA/PsaB family. In terms of assembly, the PsaA/B heterodimer binds the P700 chlorophyll special pair and subsequent electron acceptors. PSI consists of a core antenna complex that captures photons, and an electron transfer chain that converts photonic excitation into a charge separation. The eukaryotic PSI reaction center is composed of at least 11 subunits. The cofactor is P700 is a chlorophyll a/chlorophyll a' dimer, A0 is one or more chlorophyll a, A1 is one or both phylloquinones and FX is a shared 4Fe-4S iron-sulfur center..

It is found in the plastid. Its subcellular location is the chloroplast thylakoid membrane. It carries out the reaction reduced [plastocyanin] + hnu + oxidized [2Fe-2S]-[ferredoxin] = oxidized [plastocyanin] + reduced [2Fe-2S]-[ferredoxin]. Its function is as follows. PsaA and PsaB bind P700, the primary electron donor of photosystem I (PSI), as well as the electron acceptors A0, A1 and FX. PSI is a plastocyanin-ferredoxin oxidoreductase, converting photonic excitation into a charge separation, which transfers an electron from the donor P700 chlorophyll pair to the spectroscopically characterized acceptors A0, A1, FX, FA and FB in turn. Oxidized P700 is reduced on the lumenal side of the thylakoid membrane by plastocyanin. The sequence is that of Photosystem I P700 chlorophyll a apoprotein A1 from Oenothera elata subsp. hookeri (Hooker's evening primrose).